Reading from the N-terminus, the 134-residue chain is Holo-[acyl-carrier-protein] synthase (134 aa).

Positions 8 and 57 each coordinate Mg(2+).

This sequence belongs to the P-Pant transferase superfamily. AcpS family. Requires Mg(2+) as cofactor.

It localises to the cytoplasm. It carries out the reaction apo-[ACP] + CoA = holo-[ACP] + adenosine 3',5'-bisphosphate + H(+). Functionally, transfers the 4'-phosphopantetheine moiety from coenzyme A to a Ser of acyl-carrier-protein. This is Holo-[acyl-carrier-protein] synthase from Rhizobium leguminosarum bv. trifolii (strain WSM2304).